The primary structure comprises 1299 residues: Nuclear factor related to kappa-B-binding protein (1299 aa).

Residues 39–156 enclose the DEUBAD domain; sequence PEDLLEDPEI…LKQILASRSD (118 aa). Disordered regions lie at residues 163 to 187 and 204 to 232; these read RSGPALPFRQKRPSPSRTPEEREWR and GDTALSSDEEDLSSWLPSSPARSPSPAVP. Residues 216-232 show a composition bias toward low complexity; that stretch reads SSWLPSSPARSPSPAVP. 2 positions are modified to phosphoserine: Ser228 and Ser298. A Glycyl lysine isopeptide (Lys-Gly) (interchain with G-Cter in SUMO2) cross-link involves residue Lys327. Ser351 is subject to Phosphoserine. The winged-helix like domain stretch occupies residues 370 to 495; it reads LGINEISSSF…FCKQENEDSS (126 aa). Lys469 participates in a covalent cross-link: Glycyl lysine isopeptide (Lys-Gly) (interchain with G-Cter in SUMO2). A Glycyl lysine isopeptide (Lys-Gly) (interchain with G-Cter in SUMO1); alternate cross-link involves residue Lys488. A Glycyl lysine isopeptide (Lys-Gly) (interchain with G-Cter in SUMO2); alternate cross-link involves residue Lys488. 3 disordered regions span residues 669 to 760, 882 to 902, and 1017 to 1043; these read AAKA…SSSG, LPATASPVSKPATSSPGTSAP, and VHAADSPAKASSASAPSSTPTGTTVVK. Low complexity-rich tracts occupy residues 677-688, 695-715, and 723-733; these read QQKPKPPSKVKS, IKVLSSGPSEQSQMSLSDSSM, and VTPTTPALPAI. Residues 744–760 show a composition bias toward polar residues; it reads NKSGPSTVSEPAKSSSG. Low complexity-rich tracts occupy residues 892–902 and 1019–1043; these read PATSSPGTSAP and AADSPAKASSASAPSSTPTGTTVVK. The residue at position 1022 (Ser1022) is a Phosphoserine. An N6-acetyllysine modification is found at Lys1237. Residue Ser1291 is modified to Phosphoserine.

The protein belongs to the NFRKB family. In terms of assembly, component of the chromatin remodeling INO80 complex; specifically part of a complex module associated with the N-terminus of INO80. Interacts with UCHL5; NFRKB competes with ADRM1 for interaction with UCHL5. As to expression, expressed in thymus, brain, testes, spleen and liver.

It is found in the nucleus. Its function is as follows. Binds to the DNA consensus sequence 5'-GGGGAATCTCC-3'. In terms of biological role, putative regulatory component of the chromatin remodeling INO80 complex which is involved in transcriptional regulation, DNA replication and probably DNA repair. Modulates the deubiquitinase activity of UCHL5 in the INO80 complex. This chain is Nuclear factor related to kappa-B-binding protein (NFRKB), found in Homo sapiens (Human).